The sequence spans 423 residues: Glucose-1-phosphate adenylyltransferase (423 aa).

Alpha-D-glucose 1-phosphate-binding positions include Tyr-98, Gly-163, 178–179 (EK), and Ser-189.

It belongs to the bacterial/plant glucose-1-phosphate adenylyltransferase family. As to quaternary structure, homotetramer.

It catalyses the reaction alpha-D-glucose 1-phosphate + ATP + H(+) = ADP-alpha-D-glucose + diphosphate. Its pathway is glycan biosynthesis; glycogen biosynthesis. Functionally, involved in the biosynthesis of ADP-glucose, a building block required for the elongation reactions to produce glycogen. Catalyzes the reaction between ATP and alpha-D-glucose 1-phosphate (G1P) to produce pyrophosphate and ADP-Glc. This Thermotoga maritima (strain ATCC 43589 / DSM 3109 / JCM 10099 / NBRC 100826 / MSB8) protein is Glucose-1-phosphate adenylyltransferase.